The primary structure comprises 270 residues: Formamidopyrimidine-DNA glycosylase (270 aa).

The Schiff-base intermediate with DNA role is filled by proline 2. The Proton donor role is filled by glutamate 3. The Proton donor; for beta-elimination activity role is filled by lysine 58. The DNA site is built by histidine 91, arginine 110, and lysine 151. An FPG-type zinc finger spans residues 236 to 270; it reads FAYGRGGQPCKVCGTTLREIKLGQRASVYCPKCQR. The active-site Proton donor; for delta-elimination activity is the arginine 260.

It belongs to the FPG family. As to quaternary structure, monomer. Zn(2+) is required as a cofactor.

It carries out the reaction Hydrolysis of DNA containing ring-opened 7-methylguanine residues, releasing 2,6-diamino-4-hydroxy-5-(N-methyl)formamidopyrimidine.. The catalysed reaction is 2'-deoxyribonucleotide-(2'-deoxyribose 5'-phosphate)-2'-deoxyribonucleotide-DNA = a 3'-end 2'-deoxyribonucleotide-(2,3-dehydro-2,3-deoxyribose 5'-phosphate)-DNA + a 5'-end 5'-phospho-2'-deoxyribonucleoside-DNA + H(+). Its function is as follows. Involved in base excision repair of DNA damaged by oxidation or by mutagenic agents. Acts as a DNA glycosylase that recognizes and removes damaged bases. Has a preference for oxidized purines, such as 7,8-dihydro-8-oxoguanine (8-oxoG). Has AP (apurinic/apyrimidinic) lyase activity and introduces nicks in the DNA strand. Cleaves the DNA backbone by beta-delta elimination to generate a single-strand break at the site of the removed base with both 3'- and 5'-phosphates. The chain is Formamidopyrimidine-DNA glycosylase from Pseudomonas syringae pv. tomato (strain ATCC BAA-871 / DC3000).